The following is a 304-amino-acid chain: MATH domain and coiled-coil domain-containing protein At2g42470 (304 aa).

Positions 6-123 (QTSFTFEIDN…NNKLIIEVQV (118 aa)) constitute an MATH domain. Residues 219-292 (FKVDWLKKKL…LKIELDRTRR (74 aa)) are a coiled coil.

This chain is MATH domain and coiled-coil domain-containing protein At2g42470, found in Arabidopsis thaliana (Mouse-ear cress).